A 248-amino-acid polypeptide reads, in one-letter code: MFHVKHVGPVEPAAGDPEVPPVAELGAAPESAAALFGPRLATAQRYAEVLGTAGVERGLLGPREVDRIWDRHILNSAAVAELLGRGDRIIDIGSGAGLPGIPLAIARPDLEVVLLEPLLRRSEFLTEVVDELGLAVEVVRGRAEERPVRDRFGERDAAVSRAVAALDKLTKWSMPLLRHDGRMLAIKGERAAEEVDRYRRVMTASGAADVRVVTCGANYLRPPATVVSARRAKPPHPKSARTGKAGTR.

The interval 1 to 23 (MFHVKHVGPVEPAAGDPEVPPVA) is disordered. S-adenosyl-L-methionine-binding positions include Gly93, Leu98, 143-144 (AE), and Arg161. The interval 226-248 (VVSARRAKPPHPKSARTGKAGTR) is disordered. Over residues 230-248 (RRAKPPHPKSARTGKAGTR) the composition is skewed to basic residues.

This sequence belongs to the methyltransferase superfamily. RNA methyltransferase RsmG family.

It localises to the cytoplasm. Functionally, specifically methylates the N7 position of guanine in position 518 of 16S rRNA. The polypeptide is Ribosomal RNA small subunit methyltransferase G (Mycolicibacterium paratuberculosis (strain ATCC BAA-968 / K-10) (Mycobacterium paratuberculosis)).